The following is a 396-amino-acid chain: Deoxyguanosinetriphosphate triphosphohydrolase-like protein (396 aa).

In terms of domain architecture, HD spans 69–211 (RLSHSLEVSQ…AALADDIAYN (143 aa)).

It belongs to the dGTPase family. Type 2 subfamily.

The polypeptide is Deoxyguanosinetriphosphate triphosphohydrolase-like protein (Parvibaculum lavamentivorans (strain DS-1 / DSM 13023 / NCIMB 13966)).